A 34-amino-acid chain; its full sequence is Photosystem II reaction center protein M (34 aa).

The chain crosses the membrane as a helical span at residues 5 to 25; sequence ILAFIAIVLFISVPTAFLLII.

This sequence belongs to the PsbM family. In terms of assembly, PSII is composed of 1 copy each of membrane proteins PsbA, PsbB, PsbC, PsbD, PsbE, PsbF, PsbH, PsbI, PsbJ, PsbK, PsbL, PsbM, PsbT, PsbX, PsbY, PsbZ, Psb30/Ycf12, at least 3 peripheral proteins of the oxygen-evolving complex and a large number of cofactors. It forms dimeric complexes.

It is found in the plastid. The protein resides in the chloroplast thylakoid membrane. Functionally, one of the components of the core complex of photosystem II (PSII). PSII is a light-driven water:plastoquinone oxidoreductase that uses light energy to abstract electrons from H(2)O, generating O(2) and a proton gradient subsequently used for ATP formation. It consists of a core antenna complex that captures photons, and an electron transfer chain that converts photonic excitation into a charge separation. This subunit is found at the monomer-monomer interface. This chain is Photosystem II reaction center protein M, found in Cycas taitungensis (Prince sago).